Consider the following 208-residue polypeptide: Superoxide dismutase [Mn] (208 aa).

His-27, His-81, Asp-168, and His-172 together coordinate Mn(2+).

This sequence belongs to the iron/manganese superoxide dismutase family. As to quaternary structure, homodimer. Requires Mn(2+) as cofactor.

It carries out the reaction 2 superoxide + 2 H(+) = H2O2 + O2. In terms of biological role, destroys superoxide anion radicals which are normally produced within the cells and which are toxic to biological systems. The protein is Superoxide dismutase [Mn] (sodA) of Buchnera aphidicola subsp. Baizongia pistaciae (strain Bp).